Consider the following 150-residue polypeptide: Transcriptional regulator MraZ (150 aa).

SpoVT-AbrB domains lie at 7–55 (SHAI…PEPE) and 84–127 (AALM…SEES).

The protein belongs to the MraZ family. Forms oligomers.

Its subcellular location is the cytoplasm. The protein resides in the nucleoid. In Marinobacter nauticus (strain ATCC 700491 / DSM 11845 / VT8) (Marinobacter aquaeolei), this protein is Transcriptional regulator MraZ.